The sequence spans 227 residues: Uracil-DNA glycosylase (227 aa).

Asp-65 functions as the Proton acceptor in the catalytic mechanism.

The protein belongs to the uracil-DNA glycosylase (UDG) superfamily. UNG family.

It localises to the cytoplasm. The enzyme catalyses Hydrolyzes single-stranded DNA or mismatched double-stranded DNA and polynucleotides, releasing free uracil.. In terms of biological role, excises uracil residues from the DNA which can arise as a result of misincorporation of dUMP residues by DNA polymerase or due to deamination of cytosine. In Lactobacillus delbrueckii subsp. bulgaricus (strain ATCC 11842 / DSM 20081 / BCRC 10696 / JCM 1002 / NBRC 13953 / NCIMB 11778 / NCTC 12712 / WDCM 00102 / Lb 14), this protein is Uracil-DNA glycosylase.